The primary structure comprises 321 residues: Glutamyl-Q tRNA(Asp) synthetase (321 aa).

L-glutamate contacts are provided by residues 25–29 (RFAPS) and glutamate 61. Positions 28–38 (PSPSGDLHFGS) match the 'HIGH' region motif. 4 residues coordinate Zn(2+): cysteine 117, cysteine 119, tyrosine 131, and cysteine 135. L-glutamate is bound by residues tyrosine 188 and arginine 206. Positions 244 to 248 (KLSKQ) match the 'KMSKS' region motif. Lysine 247 contacts ATP.

The protein belongs to the class-I aminoacyl-tRNA synthetase family. GluQ subfamily. The cofactor is Zn(2+).

Catalyzes the tRNA-independent activation of glutamate in presence of ATP and the subsequent transfer of glutamate onto a tRNA(Asp). Glutamate is transferred on the 2-amino-5-(4,5-dihydroxy-2-cyclopenten-1-yl) moiety of the queuosine in the wobble position of the QUC anticodon. This Yersinia pestis protein is Glutamyl-Q tRNA(Asp) synthetase.